An 834-amino-acid chain; its full sequence is Protein ROOT HAIR DEFECTIVE 3 homolog 2 (834 aa).

Over 1–683 the chain is Cytoplasmic; sequence MGENDDGCST…EAHKRNNNWL (683 aa). The GB1/RHD3-type G domain maps to 37–252; the sequence is GLSYAVVAIM…ISPGGLAGDR (216 aa). 47–54 contacts GTP; it reads GPQSSGKS. Residues 214-241 are a coiled coil; it reads MIVALSSYEEKEKQFEQEVAELRQRFFH. The chain crosses the membrane as a helical span at residues 684–704; the sequence is PPAWAIVLMIVLGFNEFMMLL. The Lumenal portion of the chain corresponds to 705 to 707; that stretch reads KNP. Residues 708–728 form a helical membrane-spanning segment; sequence LYLLGFFVAFLLSKALWVQLD. Topologically, residues 729-834 are cytoplasmic; that stretch reads IPREFQHGAV…NVQESEISQM (106 aa). Polar residues predominate over residues 767–783; the sequence is TTQEVPDLSASQTYRQQ. The tract at residues 767–834 is disordered; it reads TTQEVPDLSA…NVQESEISQM (68 aa). The segment covering 784-803 has biased composition (low complexity); that stretch reads SPSHSISSTISESVASNISS. Residues 823 to 834 are compositionally biased toward polar residues; the sequence is TNNVQESEISQM.

This sequence belongs to the TRAFAC class dynamin-like GTPase superfamily. GB1/RHD3 GTPase family. RHD3 subfamily. As to expression, expressed in roots, leaves, stems and flowers.

Its subcellular location is the endoplasmic reticulum membrane. In terms of biological role, probable GTP-binding protein that may be involved in cell development. The sequence is that of Protein ROOT HAIR DEFECTIVE 3 homolog 2 from Arabidopsis thaliana (Mouse-ear cress).